A 941-amino-acid polypeptide reads, in one-letter code: HMG box transcription factor BBX (941 aa).

Residues 1 to 18 (MKGSNRNKDHSAEGEGVG) show a composition bias toward basic and acidic residues. 4 disordered regions span residues 1–21 (MKGS…GKRP), 39–80 (FSEE…EQRA), 157–200 (VKSP…FGMA), and 221–242 (TPEV…LRQK). Composition is skewed to acidic residues over residues 39 to 52 (FSEE…EEDI) and 63 to 75 (LEQD…DDES). The segment at residues 80 to 148 (ARRPMNAFLL…AFMKANPGYK (69 aa)) is a DNA-binding region (HMG box). Residues 177 to 191 (SSRDLPSPKKAKTEE) are compositionally biased toward basic and acidic residues. S243 is modified (phosphoserine). Residues 326-370 (GRIKELEKGKEEKEIKMEKTDETRLQKEAEFEKSAKENLRDSKEL) adopt a coiled-coil conformation. Residue K385 forms a Glycyl lysine isopeptide (Lys-Gly) (interchain with G-Cter in SUMO2) linkage. The disordered stretch occupies residues 438–482 (IEDPAALNKPEKLKKKKKKSKMDRHGNDKSTPKKTCKKRQSSESD). The segment covering 449–459 (KLKKKKKKSKM) has biased composition (basic residues). Phosphoserine is present on residues S478 and S485. Basic and acidic residues-rich tracts occupy residues 499–508 (GIEKLGDTPR) and 536–552 (KKMS…ESRP). Disordered regions lie at residues 499–600 (GIEK…SDCH) and 635–677 (NVDR…KKTK). K573 participates in a covalent cross-link: Glycyl lysine isopeptide (Lys-Gly) (interchain with G-Cter in SUMO2). Positions 661–670 (TFSQSGTSGS) are enriched in low complexity. K696 is covalently cross-linked (Glycyl lysine isopeptide (Lys-Gly) (interchain with G-Cter in SUMO2)). S704 is modified (phosphoserine). 3 disordered regions span residues 714-771 (PVPR…DKWS), 803-888 (IPSI…SSTP), and 912-941 (HRGQ…CADQ). Over residues 723–742 (GNVSSEPTKTSKGPFQSQKK) the composition is skewed to polar residues. Residues 743 to 757 (NLFHKIVSKYKHKKE) show a composition bias toward basic residues. The segment covering 758 to 771 (KPNVPEKGSGDKWS) has biased composition (basic and acidic residues). Polar residues predominate over residues 805–817 (SIFNTPEPTTTQE). S822 is subject to Phosphoserine. Positions 823 to 834 (QKRKARKTKITH) are enriched in basic residues. At S844 the chain carries Phosphoserine. Positions 866 to 882 (TETDCNDKCSHNTEVGE) are enriched in basic and acidic residues.

The protein localises to the nucleus. Functionally, transcription factor that is necessary for cell cycle progression from G1 to S phase. The chain is HMG box transcription factor BBX (BBX) from Homo sapiens (Human).